The primary structure comprises 261 residues: Cytochrome c oxidase subunit 3 (261 aa).

Over 1 to 15 the chain is Mitochondrial matrix; it reads MTHQTHAYHMVNPSP. The helical transmembrane segment at 16 to 34 threads the bilayer; the sequence is WPLTGALSALLMTSGLIMW. The Mitochondrial intermembrane portion of the chain corresponds to 35-40; it reads FHFNSM. The helical transmembrane segment at 41-66 threads the bilayer; it reads YLLMLGLTTNTLTMYQWWRDIVREST. The Mitochondrial matrix portion of the chain corresponds to 67 to 72; that stretch reads FQGHHT. Residues 73-105 traverse the membrane as a helical segment; sequence PIVQKGLRYGMILFIVSEVFFFAGFFWAFYHSS. Over 106 to 128 the chain is Mitochondrial intermembrane; sequence LAPTPELGGCWPPTGITPLNPME. A helical membrane pass occupies residues 129 to 152; sequence VPLLNTSVLLASGVSITWAHHSLM. Topologically, residues 153 to 155 are mitochondrial matrix; sequence EGN. A helical transmembrane segment spans residues 156-183; that stretch reads RKHMLQALFITISLGIYFTLLQASEYYE. Topologically, residues 184–190 are mitochondrial intermembrane; the sequence is TPFTISD. The chain crosses the membrane as a helical span at residues 191–223; it reads GIYGSTFFMATGFHGLHVIIGSTFLIVCFVRQL. At 224–232 the chain is on the mitochondrial matrix side; that stretch reads KFHFTSNHH. The helical transmembrane segment at 233–256 threads the bilayer; it reads FGFEAAAWYWHFVDVVWLFLYVSI. At 257–261 the chain is on the mitochondrial intermembrane side; the sequence is YWWGS.

The protein belongs to the cytochrome c oxidase subunit 3 family. Component of the cytochrome c oxidase (complex IV, CIV), a multisubunit enzyme composed of 14 subunits. The complex is composed of a catalytic core of 3 subunits MT-CO1, MT-CO2 and MT-CO3, encoded in the mitochondrial DNA, and 11 supernumerary subunits COX4I, COX5A, COX5B, COX6A, COX6B, COX6C, COX7A, COX7B, COX7C, COX8 and NDUFA4, which are encoded in the nuclear genome. The complex exists as a monomer or a dimer and forms supercomplexes (SCs) in the inner mitochondrial membrane with NADH-ubiquinone oxidoreductase (complex I, CI) and ubiquinol-cytochrome c oxidoreductase (cytochrome b-c1 complex, complex III, CIII), resulting in different assemblies (supercomplex SCI(1)III(2)IV(1) and megacomplex MCI(2)III(2)IV(2)).

It is found in the mitochondrion inner membrane. The catalysed reaction is 4 Fe(II)-[cytochrome c] + O2 + 8 H(+)(in) = 4 Fe(III)-[cytochrome c] + 2 H2O + 4 H(+)(out). Component of the cytochrome c oxidase, the last enzyme in the mitochondrial electron transport chain which drives oxidative phosphorylation. The respiratory chain contains 3 multisubunit complexes succinate dehydrogenase (complex II, CII), ubiquinol-cytochrome c oxidoreductase (cytochrome b-c1 complex, complex III, CIII) and cytochrome c oxidase (complex IV, CIV), that cooperate to transfer electrons derived from NADH and succinate to molecular oxygen, creating an electrochemical gradient over the inner membrane that drives transmembrane transport and the ATP synthase. Cytochrome c oxidase is the component of the respiratory chain that catalyzes the reduction of oxygen to water. Electrons originating from reduced cytochrome c in the intermembrane space (IMS) are transferred via the dinuclear copper A center (CU(A)) of subunit 2 and heme A of subunit 1 to the active site in subunit 1, a binuclear center (BNC) formed by heme A3 and copper B (CU(B)). The BNC reduces molecular oxygen to 2 water molecules using 4 electrons from cytochrome c in the IMS and 4 protons from the mitochondrial matrix. The polypeptide is Cytochrome c oxidase subunit 3 (MT-CO3) (Phoca vitulina (Harbor seal)).